A 358-amino-acid chain; its full sequence is tRNA (guanine-N(7)-)-methyltransferase (358 aa).

The interval Met1–Asp29 is disordered. Residues Gly99 and Glu122–Ile123 contribute to the S-adenosyl-L-methionine site. Over residues Thr151–Thr186 the composition is skewed to low complexity. Positions Thr151–Thr194 are disordered. Residues Asn209 to Thr210 and Cys229 each bind S-adenosyl-L-methionine. Asp232 is an active-site residue. Thr330 to Glu332 lines the S-adenosyl-L-methionine pocket.

Belongs to the class I-like SAM-binding methyltransferase superfamily. TrmB family. In terms of assembly, forms a complex with trm82.

The protein localises to the nucleus. It catalyses the reaction guanosine(46) in tRNA + S-adenosyl-L-methionine = N(7)-methylguanosine(46) in tRNA + S-adenosyl-L-homocysteine. Its pathway is tRNA modification; N(7)-methylguanine-tRNA biosynthesis. Functionally, catalyzes the formation of N(7)-methylguanine at position 46 (m7G46) in tRNA. In Aspergillus fumigatus (strain CBS 144.89 / FGSC A1163 / CEA10) (Neosartorya fumigata), this protein is tRNA (guanine-N(7)-)-methyltransferase (trm8).